A 582-amino-acid polypeptide reads, in one-letter code: Cryptochrome DASH, chloroplastic/mitochondrial (582 aa).

The N-terminal 49 residues, 1–49 (MLHFLSSSSPLNPQFLLLPRQSARLRVLLSIPVSAMSSSSSSSSRGALA), are a transit peptide targeting the chloroplast and mitochondrion. Positions 84 to 234 (GVAIVWFRND…KLQLIWGATL (151 aa)) constitute a Photolyase/cryptochrome alpha/beta domain. Positions 560-582 (GHQKRDQQFNRQRRPGHMYRRQK) are disordered. Over residues 570-582 (RQRRPGHMYRRQK) the composition is skewed to basic residues.

Belongs to the DNA photolyase class-1 family. FAD is required as a cofactor. Requires (6R)-5,10-methylene-5,6,7,8-tetrahydrofolate as cofactor.

Its subcellular location is the plastid. It localises to the chloroplast. It is found in the mitochondrion. In terms of biological role, may have a photoreceptor function. Binds ss- and ds-DNA in a sequence non-specific manner, lacks photolyase activity. The sequence is that of Cryptochrome DASH, chloroplastic/mitochondrial (CRYD) from Oryza sativa subsp. japonica (Rice).